Here is a 361-residue protein sequence, read N- to C-terminus: Hydroxycarboxylate dehydrogenase B (361 aa).

NAD(+) is bound by residues histidine 48, 122-124 (GRI), 178-182 (LLDYA), histidine 234, asparagine 270, and 313-316 (GEWE).

The protein belongs to the LDH2/MDH2 oxidoreductase family.

The enzyme catalyses 2-hydroxyglutarate + NADP(+) = 2-oxoglutarate + NADPH + H(+). It catalyses the reaction 2-hydroxyglutarate + NAD(+) = 2-oxoglutarate + NADH + H(+). The catalysed reaction is 3-phenyllactate + NADP(+) = 3-phenylpyruvate + NADPH + H(+). It carries out the reaction 3-phenyllactate + NAD(+) = 3-phenylpyruvate + NADH + H(+). The enzyme catalyses (2R)-2-hydroxy-3-(4-hydroxyphenyl)propanoate + NAD(+) = 3-(4-hydroxyphenyl)pyruvate + NADH + H(+). It catalyses the reaction (2R)-2-hydroxy-3-(4-hydroxyphenyl)propanoate + NADP(+) = 3-(4-hydroxyphenyl)pyruvate + NADPH + H(+). The catalysed reaction is (2R)-3-(3,4-dihydroxyphenyl)lactate + NADP(+) = 3-(3,4-dihydroxyphenyl)pyruvate + NADPH + H(+). It carries out the reaction (2R)-3-(3,4-dihydroxyphenyl)lactate + NAD(+) = 3-(3,4-dihydroxyphenyl)pyruvate + NADH + H(+). Its function is as follows. Catalyzes the NAD(P)H-dependent reduction of 2-oxoglutarate, phenylpyruvate and (4-hydroxyphenyl)pyruvate, leading to the respective 2-hydroxycarboxylate in vitro. Shows a preference for NADPH over NADH as a redox partner. Do not catalyze the reverse reactions. The polypeptide is Hydroxycarboxylate dehydrogenase B (Escherichia coli (strain K12)).